Here is a 122-residue protein sequence, read N- to C-terminus: HLLQFNKMIKFETRKNAIPFYAFYGCYCGWGGRGRPKDATDRCCFVHDCCYGKLAKCNTKWDIYRYSLKSGYITCGKGTWCEEQICECDRVAAECLRRSLSTYKYGYMFYPDSRCRGPSETC.

Disulfide bonds link C26–C115, C28–C44, C43–C95, C49–C122, C50–C88, C57–C81, and C75–C86. Ca(2+) contacts are provided by Y27, G29, and G31. H47 is a catalytic residue. Position 48 (D48) interacts with Ca(2+). Residue D89 is part of the active site.

It belongs to the phospholipase A2 family. Group II subfamily. D49 sub-subfamily. Heterodimer of one of the acidic (CA1, CA2, CA3 or CA4) and one of the basic (CBa1, CBa2, CBb, CBc or CBd) subunits; non-covalently linked. The acidic subunit is non-toxic, without enzymatic activity and comprises 3 peptides that are cross-linked by 5 disulfide bridges. The basic subunit is toxic, has phospholipase A2 activity and is composed of a single chain. Multiple variants of each subunit give different crotoxin complexes that can be subdivided into 2 classes: (1) those of high toxicity, low PLA2 activity (CBb, CBc and CBd linked with high affinity to any CA) and high stability (K(d)=4.5 nM) and (2) those of moderate toxicity, high PLA2 activity (CBa2 linked with low affinity to any CA) and low stability (K(d)=25 nM). Interacts with crotoxin inhibitor from Crotalus serum (CICS); the interaction leads to dissociation of the CA-CB heterodimer and to inhibition of PLA2 activity of the CB subunit. Interacts with human NBD1 domain of CFTR. It depends on Ca(2+) as a cofactor. As to expression, expressed by the venom gland.

Its subcellular location is the secreted. The enzyme catalyses a 1,2-diacyl-sn-glycero-3-phosphocholine + H2O = a 1-acyl-sn-glycero-3-phosphocholine + a fatty acid + H(+). In terms of biological role, heterodimer CA-CB: Crotoxin is a potent presynaptic neurotoxin that possesses phospholipase A2 (PLA2) activity and exerts a lethal action by blocking neuromuscular transmission. It consists of a non-covalent association of a basic and weakly toxic PLA2 subunit (CBa2, CBb, CBc, or CBd), with a small acidic, non-enzymatic and non-toxic subunit (CA1, CA2, CA3 or CA4). The complex acts by binding to a specific 48-kDa protein (R48) receptor located on presynaptic membranes, forming a transient ternary complex CA-CB-R48, followed by dissociation of the CA-CB complex and release of the CA subunit. At equilibrium, only the CB subunits remain associated with the specific crotoxin receptor. In addition to neurotoxicity, crotoxin has been found to exert myotoxicity, nephrotoxicity, and cardiovascular toxicity. Moreover, anti-inflammatory, immunomodulatory, anti-tumor and analgesic effects of crotoxin have also been reported. Its function is as follows. Monomer CBd: The basic subunit of crotoxin is a snake venom phospholipase A2 (PLA2) that exhibits weak neurotoxicity (10-fold less than the heterodimer) and very strong anticoagulant effects by binding to factor Xa (F10) and inhibiting the prothrombinase activity. In addition, it shows the same effects described for the heterodimer and binds the nucleotide-binding domain (NBD1) of CFTR chloride channels and increases the channel current. PLA2 catalyzes the calcium-dependent hydrolysis of the 2-acyl groups in 3-sn-phosphoglycerides. The protein is Phospholipase A2 crotoxin basic subunit CBd of Crotalus durissus terrificus (South American rattlesnake).